We begin with the raw amino-acid sequence, 110 residues long: U32-theraphotoxin-Cg1a (110 aa).

The N-terminal stretch at 1 to 19 (MKHCFLILFTLIVFTVVWS) is a signal peptide. Positions 20–43 (LEENEEYPDEDEMIESFMDGYSYR) are excised as a propeptide. 4 cysteine pairs are disulfide-bonded: C49-C63, C56-C69, C60-C105, and C62-C80.

The protein belongs to the neurotoxin 03 (Tx2) family. 02 subfamily. Expressed by the venom gland.

It is found in the secreted. Its function is as follows. Probable ion channel inhibitor. The sequence is that of U32-theraphotoxin-Cg1a from Chilobrachys guangxiensis (Chinese earth tiger tarantula).